We begin with the raw amino-acid sequence, 413 residues long: Oxidoreductase vrtI (413 aa).

The Fe2OG dioxygenase domain maps to 235–341 (DAESLTTLSM…RYSIAYFLRA (107 aa)). Fe cation contacts are provided by His-262, Asp-264, and His-319. Arg-332 contacts 2-oxoglutarate.

The protein belongs to the iron/ascorbate-dependent oxidoreductase family.

It functions in the pathway secondary metabolite biosynthesis; terpenoid biosynthesis. Functionally, oxidoreductase; part of the gene cluster that mediates the biosynthesis of viridicatumtoxin, a tetracycline-like fungal meroterpenoid with a unique, fused spirobicyclic ring system. The first step of the pathway is the production of the malonamoyl-CoA starter unit for the polyketide synthase vrtA. The aldolase vrtJ may be involved in the synthesis of the malonamate substrate for malonamoyl-CoA synthetase vrtB. The polyketide synthase vrtA then may utilize the malonamoyl-CoA starter unit, followed by sequential condensation of eight malonyl-CoA units to form the polyketide backbone. The cyclization of the last ring could be mediated by the lactamase-like protein vrtG. The proposed post-PKS tailoring steps are a hydroxylation at C5 catalyzed the cytochrome P450 monooxygenase vrtE, a hydroxylation at C12a catalyzed by VrtH and/or VrtI, and an O-methylation by the O-methyltransferase vrtF. VrtC is then proposed to catalyze the transfer of a geranyl group synthesized by vrtD to the aromatic C ring of the tetracyclic polyketide intermediate of viridicatumtoxin to yield previridicatumtoxin. Finally, the cytochrome P450 monooxygenase vrtK catalyzes the spirocyclization of the geranyl moiety of previridicatumtoxin to afford viridicatumtoxin. This chain is Oxidoreductase vrtI, found in Penicillium aethiopicum.